Reading from the N-terminus, the 47-residue chain is Large ribosomal subunit protein bL34 (47 aa).

The protein belongs to the bacterial ribosomal protein bL34 family.

The chain is Large ribosomal subunit protein bL34 from Corynebacterium glutamicum (strain R).